Reading from the N-terminus, the 630-residue chain is Prolactin receptor (630 aa).

Positions 1 to 23 (MMTKVGEVLLLLLLPAFVPHTDG) are cleaved as a signal peptide. The Extracellular segment spans residues 24-234 (THYSLPGKPT…VKVPEYLHRE (211 aa)). Fibronectin type-III domains follow at residues 31 to 128 (KPTE…IVQP) and 130 to 230 (PPEK…VPEY). Disulfide bonds link cysteine 37-cysteine 47 and cysteine 76-cysteine 87. N-linked (GlcNAc...) asparagine glycans are attached at residues asparagine 92 and asparagine 101. The Zn(2+) site is built by aspartate 212 and histidine 213. The short motif at 216-220 (WSEWS) is the WSXWS motif element. Residues 235–258 (KSVWILVLVFSAFILLLLTWLIHM) form a helical membrane-spanning segment. The Cytoplasmic portion of the chain corresponds to 259-630 (NSHSLKHCML…DTATVFSVHT (372 aa)). A Box 1 motif motif is present at residues 267-275 (MLPPVPGPK). A disordered region spans residues 339–389 (KSIGSASDSDSGRGSCDSDNLLMDKSGAPKEEQQQQNQEGDQIGKETQGPK). Over residues 340-357 (SIGSASDSDSGRGSCDSD) the composition is skewed to low complexity. Residues 380–389 (QIGKETQGPK) show a composition bias toward basic and acidic residues.

The protein belongs to the type I cytokine receptor family. Type 1 subfamily.

The protein localises to the membrane. In terms of biological role, this is a receptor for the anterior pituitary hormone prolactin. This chain is Prolactin receptor (prlr), found in Oreochromis niloticus (Nile tilapia).